The primary structure comprises 507 residues: Myocyte-specific enhancer factor 2D (507 aa).

The MADS-box domain maps to 3 to 57 (RKKIQIQRITDERNRQVTFTKRKFGLMKKAYELSVLCDCEIALIIFNHSNKLFQY). Positions 58–86 (ASTDMDKVLLKYTEYNEPHESRTNADIIE) form a DNA-binding region, mef2-type. A phosphoserine mark is found at serine 98, serine 106, serine 110, serine 121, and serine 180. The segment at 174–207 (TDPRLLSPQQPALQRNSVSPGLPQRPASAGAMLG) is disordered. The segment covering 180–192 (SPQQPALQRNSVS) has biased composition (polar residues). Serine 190 carries the post-translational modification Phosphoserine; by PKA. Residue serine 231 is modified to Phosphoserine. Disordered regions lie at residues 244-267 (NKVI…PSRK), 357-392 (WQQP…QQPH), and 423-507 (SIKS…WTLK). Lysine 245 carries the N6-acetyllysine modification. Phosphoserine is present on serine 251. Residues 363-389 (PQQPQPPQPPQSQPQPPQPQPQQPPQQ) are compositionally biased toward pro residues. Residue lysine 425 is modified to N6-acetyllysine; alternate. A Glycyl lysine isopeptide (Lys-Gly) (interchain with G-Cter in SUMO); alternate cross-link involves residue lysine 425. Serine 430 bears the Phosphoserine mark.

Forms a complex with class II HDACs in undifferentiating cells. On myogenic differentiation, HDACs are released into the cytoplasm allowing MEF2s to interact with other proteins for activation. Interacts with HDAC4 (in undifferentiating cells); the interaction translocates MEF2D to nuclear dots. Forms a heterodimer with MEF2A. Interacts with MAPK7; the interaction phosphorylates but does not activate MEF2D. Interacts with MYOG. Interacts with CCAR2 and HDAC3. Post-translationally, phosphorylated on Ser-430 by CDK5 is required for Lys-425 sumoylation and inhibits transcriptional activity. In neurons, enhanced CDK5 activity induced by neurotoxins promotes caspase 3-mediated cleavage leading to neuron apoptosis. Phosphorylation on Ser-180 can be enhanced by EGF. Phosphorylated and activated by CaMK4. In terms of processing, acetylated on Lys-425 by CREBBP. Acetylated by EP300. Deacetylated by SIRT1 and HDAC3. Sumoylated on Lys-425 with SUMO2 but not SUMO1; which inhibits transcriptional activity and myogenic activity. Desumoylated by SENP3.

The protein localises to the nucleus. Functionally, transcriptional activator which binds specifically to the MEF2 element, 5'-YTA[AT](4)TAR-3', found in numerous muscle-specific, growth factor- and stress-induced genes. Mediates cellular functions not only in skeletal and cardiac muscle development, but also in neuronal differentiation and survival. Plays diverse roles in the control of cell growth, survival and apoptosis via p38 MAPK signaling in muscle-specific and/or growth factor-related transcription. Plays a critical role in the regulation of neuronal apoptosis. This chain is Myocyte-specific enhancer factor 2D (Mef2d), found in Rattus norvegicus (Rat).